A 385-amino-acid polypeptide reads, in one-letter code: NADH-quinone oxidoreductase subunit H (385 aa).

8 helical membrane passes run Gly-14 to Leu-34, Phe-80 to Ile-100, Ile-130 to Met-150, Ile-172 to Phe-192, Leu-219 to Phe-239, Met-280 to Val-300, Leu-325 to Val-345, and Met-365 to Leu-385.

This sequence belongs to the complex I subunit 1 family. In terms of assembly, NDH-1 is composed of 14 different subunits. Subunits NuoA, H, J, K, L, M, N constitute the membrane sector of the complex.

It is found in the cell inner membrane. It carries out the reaction a quinone + NADH + 5 H(+)(in) = a quinol + NAD(+) + 4 H(+)(out). NDH-1 shuttles electrons from NADH, via FMN and iron-sulfur (Fe-S) centers, to quinones in the respiratory chain. The immediate electron acceptor for the enzyme in this species is believed to be ubiquinone. Couples the redox reaction to proton translocation (for every two electrons transferred, four hydrogen ions are translocated across the cytoplasmic membrane), and thus conserves the redox energy in a proton gradient. This subunit may bind ubiquinone. This chain is NADH-quinone oxidoreductase subunit H, found in Bdellovibrio bacteriovorus (strain ATCC 15356 / DSM 50701 / NCIMB 9529 / HD100).